A 72-amino-acid polypeptide reads, in one-letter code: Large ribosomal subunit protein uL29 (72 aa).

Belongs to the universal ribosomal protein uL29 family.

This Prochlorococcus marinus (strain MIT 9301) protein is Large ribosomal subunit protein uL29.